A 249-amino-acid chain; its full sequence is Undecaprenyl-diphosphatase (249 aa).

The next 8 helical transmembrane spans lie at 11 to 31 (GLTE…TAIF), 35 to 55 (PDVG…LIFV), 80 to 100 (LVLS…FIES), 101 to 121 (VFSS…LMLL), 135 to 155 (IPYL…LPGI), 180 to 200 (FLMS…KVAF), 202 to 222 (TEQI…LYLV), and 226 to 246 (VIGG…FFVL).

It belongs to the UppP family.

It localises to the cell membrane. The catalysed reaction is di-trans,octa-cis-undecaprenyl diphosphate + H2O = di-trans,octa-cis-undecaprenyl phosphate + phosphate + H(+). In terms of biological role, catalyzes the dephosphorylation of undecaprenyl diphosphate (UPP). This chain is Undecaprenyl-diphosphatase, found in Methanococcus maripaludis (strain C6 / ATCC BAA-1332).